The following is a 530-amino-acid chain: Methionine--tRNA ligase (530 aa).

A 'HIGH' region motif is present at residues 18 to 28 (YYVNDVPHIGS). The Zn(2+) site is built by Cys133, Cys136, Cys151, and His154. Residues 307 to 311 (KMGKS) carry the 'KMSKS' region motif. Lys310 serves as a coordination point for ATP.

It belongs to the class-I aminoacyl-tRNA synthetase family. MetG type 2A subfamily. Monomer. Zn(2+) is required as a cofactor.

Its subcellular location is the cytoplasm. It catalyses the reaction tRNA(Met) + L-methionine + ATP = L-methionyl-tRNA(Met) + AMP + diphosphate. Functionally, is required not only for elongation of protein synthesis but also for the initiation of all mRNA translation through initiator tRNA(fMet) aminoacylation. The sequence is that of Methionine--tRNA ligase from Nostoc sp. (strain PCC 7120 / SAG 25.82 / UTEX 2576).